A 229-amino-acid polypeptide reads, in one-letter code: Endonuclease NucS (229 aa).

This sequence belongs to the NucS endonuclease family.

Its subcellular location is the cytoplasm. Its function is as follows. Cleaves both 3' and 5' ssDNA extremities of branched DNA structures. This Corynebacterium diphtheriae (strain ATCC 700971 / NCTC 13129 / Biotype gravis) protein is Endonuclease NucS.